Reading from the N-terminus, the 456-residue chain is MVQISEVKGNGRDNRITTHSHIKGLGLKEDGTCESVGGGFIGQEKAREACGIITDLIKSKKFGGKGVLFAGGAGTGKTALALAIAQELGPKVPFCPMVGSEVYSSEIKKTEALMENFRRAIGLRVKETKEVYEGEVTEMVPEEAENPLGGYGKTISHVLLGLKTHKGTKQLKLDPSIYESLQREQVSTGDVIYIEANTGAVKRVGRSDAYATEFDLEAEEYVPMPKGEVHKRKEIVQDVTLHDLDIANARPQGGQDIMSMMGQLMKPKKTEITDKLRGEINKVVNKYIEQGIAELIPGVLFIDEVHMLDIECFTYLNQALESTISPIVIFASNRGICTIRGTEDIQAPHGIPTDLLDRLLIVRTLPYSESEIRSILQIRAKVENIILTDECLDKLAQEGSRTSLRYVIQLLTPVSIIASLHGNKEIGVQDIEECNDLFLDARRSAQVVKSSSGFLQ.

An ATP-binding site is contributed by 71–78; the sequence is GGAGTGKT.

This sequence belongs to the RuvB family. As to quaternary structure, may form heterododecamers with RVB2. Component of the SWR1 chromatin remodeling complex, the INO80 chromatin remodeling complex, and of the R2TP complex.

It is found in the nucleus. The enzyme catalyses ATP + H2O = ADP + phosphate + H(+). Its function is as follows. DNA helicase which participates in several chromatin remodeling complexes, including the SWR1 and the INO80 complexes. The SWR1 complex mediates the ATP-dependent exchange of histone H2A for the H2A variant HZT1 leading to transcriptional regulation of selected genes by chromatin remodeling. The INO80 complex remodels chromatin by shifting nucleosomes and is involved in DNA repair. Also involved in pre-rRNA processing. In Schizosaccharomyces pombe (strain 972 / ATCC 24843) (Fission yeast), this protein is RuvB-like helicase 1 (rvb1).